A 211-amino-acid chain; its full sequence is Bifunctional transcriptional activator/DNA repair enzyme AdaA (211 aa).

Cys54 (nucleophile; methyl group acceptor from methylphosphotriester) is an active-site residue. Cys54, Cys58, Cys85, and Cys88 together coordinate Zn(2+). Residues 102 to 200 (DLITEYIDKN…GQTPARFRQM (99 aa)) form the HTH araC/xylS-type domain. Positions 119–140 (ESLADICHGSPYHMHRTFKKIK) form a DNA-binding region, H-T-H motif.

Zn(2+) serves as cofactor.

It carries out the reaction (2'-deoxyribonucleoside 5'-methylphosphotriester)-DNA + L-cysteinyl-[protein] = 2'-deoxyribonucleotide-DNA + S-methyl-L-cysteinyl-[protein] + H(+). Functionally, is involved in the adaptive response to alkylation damage in DNA caused by alkylating agents. Repairs the methylphosphotriester lesions in DNA by a direct and irreversible transfer of the methyl group to one of its own cysteine residues. Its function is as follows. The methylation of AdaA by methylphosphotriesters in DNA leads to its activation as a transcriptional regulator that activates the transcription of the ada operon which consists of adaA and adaB, and of the adjacent gene alkA. The protein is Bifunctional transcriptional activator/DNA repair enzyme AdaA (adaA) of Bacillus subtilis (strain 168).